The following is a 356-amino-acid chain: DNA polymerase IV (356 aa).

The UmuC domain maps to 1-188 (MDTSRKIIHI…IPVTKFYGVG (188 aa)). Mg(2+)-binding residues include aspartate 11 and aspartate 106. Residue glutamate 107 is part of the active site.

It belongs to the DNA polymerase type-Y family. In terms of assembly, monomer. Mg(2+) is required as a cofactor.

The protein localises to the cytoplasm. It carries out the reaction DNA(n) + a 2'-deoxyribonucleoside 5'-triphosphate = DNA(n+1) + diphosphate. In terms of biological role, poorly processive, error-prone DNA polymerase involved in untargeted mutagenesis. Copies undamaged DNA at stalled replication forks, which arise in vivo from mismatched or misaligned primer ends. These misaligned primers can be extended by PolIV. Exhibits no 3'-5' exonuclease (proofreading) activity. May be involved in translesional synthesis, in conjunction with the beta clamp from PolIII. This Listeria monocytogenes serovar 1/2a (strain ATCC BAA-679 / EGD-e) protein is DNA polymerase IV.